The sequence spans 322 residues: Homeobox protein DBX1-B (322 aa).

Positions 179–238 (GMLRRAVFSDVQRKALEKMFQKQKYISKPDRKKLATKLGLKDSQVKIWFQNRRMKWRNSK) form a DNA-binding region, homeobox. Disordered regions lie at residues 238 to 266 (KERELLSSGGCREQTLPTKMNPNPDLSDV) and 296 to 322 (DLHFKSPSISSKHSDFSESEDEEITVS). Residues 312–322 (SESEDEEITVS) are compositionally biased toward acidic residues.

It belongs to the H2.0 homeobox family.

The protein localises to the nucleus. This Danio rerio (Zebrafish) protein is Homeobox protein DBX1-B (dbx1b).